Here is a 136-residue protein sequence, read N- to C-terminus: uncharacterized protein (136 aa).

Helical transmembrane passes span Ile25–Phe47 and Ile78–Ala97.

It is found in the cell membrane. This is an uncharacterized protein from Bacillus subtilis (strain 168).